A 266-amino-acid polypeptide reads, in one-letter code: Mitochondrial S-adenosylmethionine carrier protein (266 aa).

Solcar repeat units follow at residues 4–77 (RELC…AKRF), 85–167 (LSPI…LKNL), and 176–264 (VDCW…VRSS). 6 consecutive transmembrane segments (helical) span residues 5 to 25 (ELCASLLAGGAAGMSVDLILF), 49 to 69 (IYAGVPSTAVGSFPNAAAFFV), 84 to 104 (YLSPIIHMAAAFLGELVACLI), 141 to 161 (RGYKSTVLREIPFSLVQFPLW), 181 to 201 (SAVCGAFAGGFAAAVTTPLDV), and 237 to 257 (FAGVIPRMTMISLGGFIFLGA).

It belongs to the mitochondrial carrier (TC 2.A.29) family.

It localises to the mitochondrion inner membrane. It catalyses the reaction S-adenosyl-L-homocysteine(out) + S-adenosyl-L-methionine(in) = S-adenosyl-L-homocysteine(in) + S-adenosyl-L-methionine(out). Mitochondrial S-adenosyl-L-methionine/S-adenosyl-L-homocysteine antiporter. Mediates the exchange of cytosolic S-adenosyl-L-methionine, the predominant methyl-group donor for macromolecule methylation processes, for mitochondrial S-adenosylhomocysteine(SAH), a by-product of methylation reactions. This chain is Mitochondrial S-adenosylmethionine carrier protein (slc25a26), found in Xenopus laevis (African clawed frog).